The chain runs to 182 residues: Ribosome maturation factor RimM (182 aa).

The region spanning Glu-103–Phe-182 is the PRC barrel domain.

This sequence belongs to the RimM family. As to quaternary structure, binds ribosomal protein uS19.

It localises to the cytoplasm. Its function is as follows. An accessory protein needed during the final step in the assembly of 30S ribosomal subunit, possibly for assembly of the head region. Essential for efficient processing of 16S rRNA. May be needed both before and after RbfA during the maturation of 16S rRNA. It has affinity for free ribosomal 30S subunits but not for 70S ribosomes. This Vibrio campbellii (strain ATCC BAA-1116) protein is Ribosome maturation factor RimM.